Consider the following 350-residue polypeptide: Biotin synthase (350 aa).

A Radical SAM core domain is found at 41–268 (NEVQISRLLS…LSRVRLSAGR (228 aa)). 3 residues coordinate [4Fe-4S] cluster: C56, C60, and C63. [2Fe-2S] cluster-binding residues include C100, C131, C191, and R263.

Belongs to the radical SAM superfamily. Biotin synthase family. In terms of assembly, homodimer. It depends on [4Fe-4S] cluster as a cofactor. Requires [2Fe-2S] cluster as cofactor.

It carries out the reaction (4R,5S)-dethiobiotin + (sulfur carrier)-SH + 2 reduced [2Fe-2S]-[ferredoxin] + 2 S-adenosyl-L-methionine = (sulfur carrier)-H + biotin + 2 5'-deoxyadenosine + 2 L-methionine + 2 oxidized [2Fe-2S]-[ferredoxin]. It functions in the pathway cofactor biosynthesis; biotin biosynthesis; biotin from 7,8-diaminononanoate: step 2/2. Its function is as follows. Catalyzes the conversion of dethiobiotin (DTB) to biotin by the insertion of a sulfur atom into dethiobiotin via a radical-based mechanism. The chain is Biotin synthase from Shewanella putrefaciens (strain CN-32 / ATCC BAA-453).